The following is a 305-amino-acid chain: Glycine--tRNA ligase alpha subunit (305 aa).

This sequence belongs to the class-II aminoacyl-tRNA synthetase family. In terms of assembly, tetramer of two alpha and two beta subunits.

Its subcellular location is the cytoplasm. The enzyme catalyses tRNA(Gly) + glycine + ATP = glycyl-tRNA(Gly) + AMP + diphosphate. The protein is Glycine--tRNA ligase alpha subunit of Streptococcus suis (strain 05ZYH33).